The primary structure comprises 219 residues: Response regulator ArlR (219 aa).

A Response regulatory domain is found at 3–116 (NILIVEDEQN…ELFARIRAVL (114 aa)). Asp52 carries the post-translational modification 4-aspartylphosphate. Positions 122-219 (KDIIDINGIK…TVRGVGYVIR (98 aa)) form a DNA-binding region, ompR/PhoB-type.

Phosphorylated by ArlS.

It localises to the cytoplasm. Functionally, member of the two-component regulatory system ArlS/ArlR. The sequence is that of Response regulator ArlR (arlR) from Staphylococcus haemolyticus (strain JCSC1435).